Here is a 220-residue protein sequence, read N- to C-terminus: Kinetochore protein Spc25 (220 aa).

The stretch at 79–114 forms a coiled coil; the sequence is HLTQEVEAIKLRNLAMKDQIKQQKMLNNQRKNEIME.

The protein belongs to the SPC25 family. In terms of assembly, component of the Ndc80 complex, which is composed of Ndc80, Nuf2 and Spc25.

The protein localises to the nucleus. It localises to the chromosome. The protein resides in the centromere. It is found in the kinetochore. In terms of biological role, acts as a component of the essential kinetochore-associated Ndc80 complex, which is required for chromosome segregation and spindle checkpoint activity during meiosis and mitosis. Required for kinetochore integrity and the organization of stable microtubule binding sites in the outer plate of the kinetochore. Participates in SAC signaling that responds specifically to disruptions in spindle microtubule dynamics. The NDC80 complex synergistically enhances the affinity of the SKA1 complex for microtubules and may allow the NDC80 complex to track depolymerizing microtubules. The chain is Kinetochore protein Spc25 from Drosophila orena (Fruit fly).